An 81-amino-acid chain; its full sequence is Sulfur carrier protein TusA (81 aa).

Cys19 acts as the Cysteine persulfide intermediate in catalysis.

This sequence belongs to the sulfur carrier protein TusA family. Interacts with IscS.

It is found in the cytoplasm. It participates in tRNA modification. Its function is as follows. Sulfur carrier protein involved in sulfur trafficking in the cell. Part of a sulfur-relay system required for 2-thiolation during synthesis of 2-thiouridine of the modified wobble base 5-methylaminomethyl-2-thiouridine (mnm(5)s(2)U) in tRNA. Interacts with IscS and stimulates its cysteine desulfurase activity. Accepts an activated sulfur from IscS, which is then transferred to TusD, and thus determines the direction of sulfur flow from IscS to 2-thiouridine formation. Also appears to be involved in sulfur transfer for the biosynthesis of molybdopterin. In Erwinia tasmaniensis (strain DSM 17950 / CFBP 7177 / CIP 109463 / NCPPB 4357 / Et1/99), this protein is Sulfur carrier protein TusA.